A 119-amino-acid chain; its full sequence is MARVKSGKVTRRRHKKILKLAKGYWGAKSKLFRVANQAVMKSLMYAYIGRKLRKRDFRRLWITRINAAARAYGISYSRFINGLKKAGIEINRKMLSEMAIHDEKAFAELVNIAKQQLNA.

Belongs to the bacterial ribosomal protein bL20 family.

In terms of biological role, binds directly to 23S ribosomal RNA and is necessary for the in vitro assembly process of the 50S ribosomal subunit. It is not involved in the protein synthesizing functions of that subunit. The protein is Large ribosomal subunit protein bL20 of Caldanaerobacter subterraneus subsp. tengcongensis (strain DSM 15242 / JCM 11007 / NBRC 100824 / MB4) (Thermoanaerobacter tengcongensis).